A 459-amino-acid polypeptide reads, in one-letter code: Bifunctional protein GlmU (459 aa).

The tract at residues 1 to 229 is pyrophosphorylase; it reads MSNFAIXLAA…FDESLGVNDR (229 aa). Residues 8 to 11, Lys-22, Gln-72, and 77 to 78 each bind UDP-N-acetyl-alpha-D-glucosamine; these read LAAG and GT. Asp-102 provides a ligand contact to Mg(2+). Positions 139, 154, 169, and 227 each coordinate UDP-N-acetyl-alpha-D-glucosamine. Asn-227 serves as a coordination point for Mg(2+). Residues 230–250 are linker; sequence VALATAESVMRRRINHKHMVN. The interval 251 to 459 is N-acetyltransferase; it reads GVSFVNPEAT…TRLPHHPKNQ (209 aa). UDP-N-acetyl-alpha-D-glucosamine-binding residues include Arg-332 and Lys-350. His-362 serves as the catalytic Proton acceptor. Tyr-365 and Asn-376 together coordinate UDP-N-acetyl-alpha-D-glucosamine. Acetyl-CoA is bound by residues Ala-379, 385-386, Ser-404, Ala-422, and Arg-439; that span reads NY.

The protein in the N-terminal section; belongs to the N-acetylglucosamine-1-phosphate uridyltransferase family. In the C-terminal section; belongs to the transferase hexapeptide repeat family. Homotrimer. Mg(2+) serves as cofactor.

The protein resides in the cytoplasm. The catalysed reaction is alpha-D-glucosamine 1-phosphate + acetyl-CoA = N-acetyl-alpha-D-glucosamine 1-phosphate + CoA + H(+). It catalyses the reaction N-acetyl-alpha-D-glucosamine 1-phosphate + UTP + H(+) = UDP-N-acetyl-alpha-D-glucosamine + diphosphate. The protein operates within nucleotide-sugar biosynthesis; UDP-N-acetyl-alpha-D-glucosamine biosynthesis; N-acetyl-alpha-D-glucosamine 1-phosphate from alpha-D-glucosamine 6-phosphate (route II): step 2/2. It functions in the pathway nucleotide-sugar biosynthesis; UDP-N-acetyl-alpha-D-glucosamine biosynthesis; UDP-N-acetyl-alpha-D-glucosamine from N-acetyl-alpha-D-glucosamine 1-phosphate: step 1/1. Its pathway is bacterial outer membrane biogenesis; LPS lipid A biosynthesis. Catalyzes the last two sequential reactions in the de novo biosynthetic pathway for UDP-N-acetylglucosamine (UDP-GlcNAc). The C-terminal domain catalyzes the transfer of acetyl group from acetyl coenzyme A to glucosamine-1-phosphate (GlcN-1-P) to produce N-acetylglucosamine-1-phosphate (GlcNAc-1-P), which is converted into UDP-GlcNAc by the transfer of uridine 5-monophosphate (from uridine 5-triphosphate), a reaction catalyzed by the N-terminal domain. This Streptococcus pneumoniae serotype 19F (strain G54) protein is Bifunctional protein GlmU.